Here is a 920-residue protein sequence, read N- to C-terminus: KIN14B-interacting protein At4g14310 (920 aa).

Residues 1–10 (MSASTNRRRL) are compositionally biased toward basic residues. Disordered stretches follow at residues 1-199 (MSAS…EKST) and 309-375 (IDGP…EKPS). Polar residues predominate over residues 35-54 (PISSKNSNPALQKSLSSKEN). Residues 90-105 (TRSTSSGLRGRSSSPS) are compositionally biased toward low complexity. The segment covering 112-135 (SDLRKRNESRVIGEKGESGQDKKS) has biased composition (basic and acidic residues). Polar residues-rich tracts occupy residues 137–147 (LKSSGFKQGTS) and 166–184 (CPVNSSKFEGSSVARNSIS). The span at 327–337 (LNKEELEDRLL) shows a compositional bias: basic and acidic residues. The segment covering 345–355 (SRTQSKTSSHV) has biased composition (polar residues). Basic and acidic residues predominate over residues 357–374 (KGHDSVESNKAVNAEEKP). Positions 435-463 (TEILRANEALEEIDDEENREEMELEEIDD) form a coiled coil.

As to quaternary structure, interacts with KIN14B, CDKA-1, CKS1 and CKS2.

The protein localises to the cytoplasm. In terms of biological role, might be involved in division plane determination. This is KIN14B-interacting protein At4g14310 from Arabidopsis thaliana (Mouse-ear cress).